Here is a 172-residue protein sequence, read N- to C-terminus: Adenine phosphoribosyltransferase (172 aa).

This sequence belongs to the purine/pyrimidine phosphoribosyltransferase family. In terms of assembly, homodimer.

The protein localises to the cytoplasm. It catalyses the reaction AMP + diphosphate = 5-phospho-alpha-D-ribose 1-diphosphate + adenine. It participates in purine metabolism; AMP biosynthesis via salvage pathway; AMP from adenine: step 1/1. Catalyzes a salvage reaction resulting in the formation of AMP, that is energically less costly than de novo synthesis. The chain is Adenine phosphoribosyltransferase from Alkaliphilus oremlandii (strain OhILAs) (Clostridium oremlandii (strain OhILAs)).